A 354-amino-acid chain; its full sequence is Peptide chain release factor 1 (354 aa).

Residue Q231 is modified to N5-methylglutamine.

The protein belongs to the prokaryotic/mitochondrial release factor family. In terms of processing, methylated by PrmC. Methylation increases the termination efficiency of RF1.

The protein resides in the cytoplasm. Peptide chain release factor 1 directs the termination of translation in response to the peptide chain termination codons UAG and UAA. This Acholeplasma laidlawii (strain PG-8A) protein is Peptide chain release factor 1.